We begin with the raw amino-acid sequence, 603 residues long: MTKQAPPTTVLPLSEEQLDRLQTATGDLSPLQLAWISGYFWGRVAEGKPAVPPPSQSAAAAAPITLISASQTGNARRLAEQLRDDLIAARLDVVLINAGDYKFKQIAQEKLLLIITSTQGEGDPPEEAVALYKYLFSKKAPALPSTQFAVFGLGDSSYEHFAKTGKDFDSRLAELGAQRLHDRVDADVDYQAQAETWRAAIVEQLKSRVAVASPAQQQLAASGNVNEVDSSPYTKEAPLTAHLALSQKITSRQSLKDVRHLEIDLTDSGLRYQPGDALGVWYENDPALICELLALLWLKGKGDEPVPVAGQTLPLAEALQKHYELTQNTPAIVAGYAAFARDEALLAVVADKAQLQQFALATPIVDMVRRAPIELSAEQLLSLLRPLTPRLYSIASSQAEVGEEVHITVGVVRYEIDGRPRTGGASGYLADRLGEDDELRVFIEHNDNFRLPGDPNTPVIMIGPGTGIAPFRAFLQQREADGAPGQNWLFFGNPHFTDDFLYQVEWQRYVKERLLTKISLAWSRDQAEKIYVQDRVREQGAEVWRWIQQGAHIYVCGDANRMARDVEQALVAVVAEYGCMDPEQADEYLSELRIERRYQRDVY.

Residues 64 to 202 (ITLISASQTG…QAETWRAAIV (139 aa)) enclose the Flavodoxin-like domain. FMN-binding positions include 70 to 75 (SQTGNA), 117 to 120 (STQG), and 153 to 162 (LGDSSYEHFA). The region spanning 236–452 (EAPLTAHLAL…IEHNDNFRLP (217 aa)) is the FAD-binding FR-type domain. FAD contacts are provided by residues T326, L360, 390 to 393 (RLYS), 408 to 410 (TVG), Y414, and 423 to 426 (GGAS). NADP(+)-binding positions include 523–524 (SR), 529–533 (KIYVQ), and D565. Residue Y603 coordinates FAD.

The protein belongs to the NADPH-dependent sulphite reductase flavoprotein subunit CysJ family. This sequence in the N-terminal section; belongs to the flavodoxin family. It in the C-terminal section; belongs to the flavoprotein pyridine nucleotide cytochrome reductase family. As to quaternary structure, alpha(8)-beta(8). The alpha component is a flavoprotein, the beta component is a hemoprotein. The cofactor is FAD. FMN serves as cofactor.

It carries out the reaction hydrogen sulfide + 3 NADP(+) + 3 H2O = sulfite + 3 NADPH + 4 H(+). It functions in the pathway sulfur metabolism; hydrogen sulfide biosynthesis; hydrogen sulfide from sulfite (NADPH route): step 1/1. In terms of biological role, component of the sulfite reductase complex that catalyzes the 6-electron reduction of sulfite to sulfide. This is one of several activities required for the biosynthesis of L-cysteine from sulfate. The flavoprotein component catalyzes the electron flow from NADPH -&gt; FAD -&gt; FMN to the hemoprotein component. This is Sulfite reductase [NADPH] flavoprotein alpha-component from Sodalis glossinidius (strain morsitans).